The primary structure comprises 237 residues: UPF0053 inner membrane protein YgdQ (237 aa).

The Periplasmic segment spans residues 1-17 (MLFAWITDPNAWLALGT). Residues 18–38 (LTLLEIVLGIDNIIFLSLVVA) form a helical membrane-spanning segment. At 39 to 50 (KLPTAQRAHARR) the chain is on the cytoplasmic side. A helical membrane pass occupies residues 51–71 (LGLAGAMVMRLALLASIAWVT). The Periplasmic segment spans residues 72 to 79 (RLTNPLFT). The helical transmembrane segment at 80-100 (IFSQEISARDLILLLGGLFLI) threads the bilayer. The Cytoplasmic segment spans residues 101–124 (WKASKEIHESIEGEEEGLKTRVSS). A helical membrane pass occupies residues 125–145 (FLGAIVQIMLLDIIFSLDSVI). The Periplasmic portion of the chain corresponds to 146-151 (TAVGLS). The helical transmembrane segment at 152–172 (DHLFIMMAAVVIAVGVMMFAA) threads the bilayer. The Cytoplasmic portion of the chain corresponds to 173 to 186 (RSIGDFVERHPSVK). A helical membrane pass occupies residues 187–207 (MLALSFLILVGFTLILESFDI). Residues 208-209 (HV) lie on the Periplasmic side of the membrane. The chain crosses the membrane as a helical span at residues 210–230 (PKGYIYFAMFFSIAVESLNLI). At 231-237 (RNKKNPL) the chain is on the cytoplasmic side.

Belongs to the UPF0053 family.

It localises to the cell inner membrane. The sequence is that of UPF0053 inner membrane protein YgdQ (ygdQ) from Escherichia coli O157:H7.